Reading from the N-terminus, the 122-residue chain is Small ribosomal subunit protein uS13 (122 aa).

The disordered stretch occupies residues 99-122 (RGQRTHTNARTRKGPAKAIAGKKK).

Belongs to the universal ribosomal protein uS13 family. In terms of assembly, part of the 30S ribosomal subunit. Forms a loose heterodimer with protein S19. Forms two bridges to the 50S subunit in the 70S ribosome.

Located at the top of the head of the 30S subunit, it contacts several helices of the 16S rRNA. In the 70S ribosome it contacts the 23S rRNA (bridge B1a) and protein L5 of the 50S subunit (bridge B1b), connecting the 2 subunits; these bridges are implicated in subunit movement. Contacts the tRNAs in the A and P-sites. The sequence is that of Small ribosomal subunit protein uS13 from Sinorhizobium medicae (strain WSM419) (Ensifer medicae).